The primary structure comprises 569 residues: MTVENVEEKLSINEHLKTDSDFLRGGIEEGLDTAVTGAFSEGDQQLIKFHGFYQQDDRDLRNERKEQKLEPLYSFMLRARVAGGVCTPEQWLGVDEISSTLTSSNSIRLTTRQTFQYHGISKRNLRTLIQSLDKKALDSIAACGDVNRNVMCNPNPVESRLHEQAYYWAKKLSDIYLPRTKAYAEIWLGDDKVATSEGDEVEPIYGKTYLPRKFKMAVAVPPDNDVDVYTNDLGLIAVAQEGELVGFNLVAGGGMGSTHGEVETFPRLADDFGFIKAEDTLKFAEAILKVQRDWGNRSNRKQSRLKYTIVKHGYDAFKAEVEKRAGVTFEPKRDVVIGDRGDRYGWIKGVDNRWHLTLFIEGGRIKDLPGQPLQTGLREIAKIHKGDFRMTSNQNFIVAGVAEEDKEAIEALARNHGLMGKLITETRGRSIACVALPTCALAMAEAERYFPDFLTKVESLQEKHGFADQGIVIRMTGCPNGCARPFAAEIGLVGKAPGRYNLYLGASFEGTRLNKLYRENIQEAEILSELDQLFARYVSEREEGETFGNFTVRSGVVKAVIDAAKDFHD.

[4Fe-4S] cluster is bound by residues C433, C439, C478, and C482. C482 is a siroheme binding site.

The protein belongs to the nitrite and sulfite reductase 4Fe-4S domain family. In terms of assembly, alpha(8)-beta(8). The alpha component is a flavoprotein, the beta component is a hemoprotein. Siroheme serves as cofactor. [4Fe-4S] cluster is required as a cofactor.

It carries out the reaction hydrogen sulfide + 3 NADP(+) + 3 H2O = sulfite + 3 NADPH + 4 H(+). It functions in the pathway sulfur metabolism; hydrogen sulfide biosynthesis; hydrogen sulfide from sulfite (NADPH route): step 1/1. Functionally, component of the sulfite reductase complex that catalyzes the 6-electron reduction of sulfite to sulfide. This is one of several activities required for the biosynthesis of L-cysteine from sulfate. This Shewanella sediminis (strain HAW-EB3) protein is Sulfite reductase [NADPH] hemoprotein beta-component.